The sequence spans 134 residues: Postmeiotic segregation increased 2-like protein 5 (134 aa).

The protein belongs to the DNA mismatch repair MutL/HexB family.

This Homo sapiens (Human) protein is Postmeiotic segregation increased 2-like protein 5 (PMS2P5).